The sequence spans 545 residues: Sphingosine-1-phosphate lyase (545 aa).

Topologically, residues 1–26 (MRPFSGSDCLKPVTEGINRAFGAKEP) are lumenal. The chain crosses the membrane as a helical; Signal-anchor for type III membrane protein span at residues 27–47 (WQVATITATTVLGGVWLWTVI). The Cytoplasmic portion of the chain corresponds to 48–545 (CQDENLYIRG…HSMYYTPSQK (498 aa)). N6-(pyridoxal phosphate)lysine is present on K342.

This sequence belongs to the group II decarboxylase family. Sphingosine-1-phosphate lyase subfamily. It depends on pyridoxal 5'-phosphate as a cofactor. In terms of tissue distribution, localized to the developing gut primordium during embryogenesis.

Its subcellular location is the endoplasmic reticulum membrane. The enzyme catalyses sphinganine 1-phosphate = hexadecanal + phosphoethanolamine. Its pathway is lipid metabolism; sphingolipid metabolism. Cleaves phosphorylated sphingoid bases (PSBs), such as sphingosine-1-phosphate, into fatty aldehydes and phosphoethanolamine. Sphingolipid catabolism is required for normal development including viability, reproduction and muscle development. The protein is Sphingosine-1-phosphate lyase of Drosophila melanogaster (Fruit fly).